Reading from the N-terminus, the 946-residue chain is Zinc finger CCCH-type antiviral protein 1 (946 aa).

Positions 1-254 (MTDPEVFCFI…DRSKSRDRFH (254 aa)) are N-terminal domain. The Nuclear localization signal motif lies at 69-76 (RARVCRRK). 4 C3H1-type zinc fingers span residues 73–86 (CRRK…DSLH), 87–113 (LCKL…HDVL), 150–172 (CKSY…ERLH), and 173–194 (ICEH…HNLM). 2 disordered regions span residues 221-283 (NKHT…KDPL) and 302-354 (RAQL…AAGF). The binding to EXOSC5 stretch occupies residues 224 to 254 (TRRNPPSMRAPHPHRRGGAHRDRSKSRDRFH). Basic and acidic residues predominate over residues 242–257 (AHRDRSKSRDRFHHNS). A Phosphoserine modification is found at Ser-257. Ser-262 carries the post-translational modification Phosphoserine; by GSK3-beta. Phosphoserine is present on residues Ser-265, Ser-269, and Ser-273. Thr-277 carries the phosphothreonine modification. The short motif at 283 to 290 (LEDVSADV) is the Nuclear export signal element. 2 positions are modified to phosphoserine: Ser-324 and Ser-350. Residues 412–413 (KR) carry the Nuclear localization signal motif. Ser-425 carries the phosphoserine modification. The interval 461-491 (NPAWPGTSTHNGPNGFSQIMDETPNVSKSSP) is disordered. The span at 466–477 (GTSTHNGPNGFS) shows a compositional bias: polar residues. At Tyr-508 the chain carries Phosphotyrosine. Residues 523 to 570 (GETTTPVQGSNRLPPSPLSSSTSHRVAASGSPGKSSTHASVSPASEPS) are disordered. Positions 524–533 (ETTTPVQGSN) are enriched in polar residues. Position 553 is a phosphoserine (Ser-553). Over residues 554–567 (PGKSSTHASVSPAS) the composition is skewed to polar residues. Phosphoserine is present on residues Ser-583 and Ser-680. Residues 684–771 (FVEKTLNSVF…ASKTQRHVVR (88 aa)) enclose the WWE domain. Residues 805–946 (SPQRNASTVS…SLDSSGLQRK (142 aa)) form the PARP catalytic domain.

It belongs to the ARTD/PARP family. As to quaternary structure, homodimer or homooligomer. Homooligomerization is essential for its antiviral activity. Interacts with EXOSC5. Interacts (via N-terminal domain) with DDX17 in an RNA-independent manner. Interacts with EXOSC3, EXOSC7, DCP2 and DCP1A. Interacts with PARN in an RNA-independent manner. Interacts with XRN1 in an RNA-dependent manner. Interacts (via N-terminal domain) with DHX30 (via N-terminus) in an RNA-independent manner. Isoform 2 interacts (via zinc-fingers) with RIGI in an RNA-dependent manner. In terms of processing, phosphorylation at Ser-273 is essential for sequential phosphorylation of Ser-269, Ser-265, Ser-262 and Ser-257 by GSK3-beta. Phosphorylation by GSK3-beta enhances its antiviral activity.

Its subcellular location is the cytoplasm. It is found in the nucleus. In terms of biological role, antiviral protein which inhibits the replication of viruses by recruiting the cellular RNA degradation machineries to degrade the viral mRNAs. Binds to a ZAP-responsive element (ZRE) present in the target viral mRNA, recruits cellular poly(A)-specific ribonuclease PARN to remove the poly(A) tail, and the 3'-5' exoribonuclease complex exosome to degrade the RNA body from the 3'-end. It also recruits the decapping complex DCP1-DCP2 through RNA helicase p72 (DDX17) to remove the cap structure of the viral mRNA to initiate its degradation from the 5'-end. Its target viruses belong to families which include retroviridae: human immunodeficiency virus type 1 (HIV-1) and moloney and murine leukemia virus (MoMLV), filoviridae: ebola virus (EBOV) and marburg virus (MARV), togaviridae: sindbis virus (SINV) and Ross river virus (RRV). Specifically targets the multiply spliced but not unspliced or singly spliced HIV-1 mRNAs for degradation. Isoform 1 is a more potent viral inhibitor than isoform 2. Isoform 2 acts as a positive regulator of RIG-I signaling resulting in activation of the downstream effector IRF3 leading to the expression of type I IFNs and IFN stimulated genes (ISGs). The chain is Zinc finger CCCH-type antiviral protein 1 (Zc3hav1) from Mus musculus (Mouse).